Consider the following 118-residue polypeptide: Protein LH1 (118 aa).

This Snake adenovirus serotype 1 (SnAdV-1) protein is Protein LH1.